Consider the following 446-residue polypeptide: Phosphoglucosamine mutase (446 aa).

The Phosphoserine intermediate role is filled by S100. Residues S100, D241, D243, and D245 each coordinate Mg(2+). At S100 the chain carries Phosphoserine.

This sequence belongs to the phosphohexose mutase family. The cofactor is Mg(2+). In terms of processing, activated by phosphorylation.

The enzyme catalyses alpha-D-glucosamine 1-phosphate = D-glucosamine 6-phosphate. Functionally, catalyzes the conversion of glucosamine-6-phosphate to glucosamine-1-phosphate. This is Phosphoglucosamine mutase from Methylobacterium nodulans (strain LMG 21967 / CNCM I-2342 / ORS 2060).